The primary structure comprises 279 residues: MLIIELLKAIFFGIIEGITEWLPVSSTGHLILVQEFIRLNQDKAFIEMFNIVIQLGAIIAVMLIYFERLNPFQPGKTAREVQLTWQLWLKVVIACIPSILIAVPLDNWFEAHFYFMVPIAIALIVYGIAFIWIEKQNAQQEPAVTDLARMSYKTAFFIGCFQVLSIVPGTSRSGATILGAIILGTSRTVAADFTFFLAIPTMFGYSGLKAVKFFLDGHHLDFAQVLILLVASLTAFVVSLLAIRFLTDYVKKHDFTIFGKYRIVLGSLLLIYSFFKFVF.

Helical transmembrane passes span Leu2–Leu22, Ala44–Ile64, Trp85–Leu105, Phe113–Ile133, Val163–Leu183, Thr188–Leu208, Ala223–Ile243, and Phe255–Phe275.

It belongs to the UppP family.

It is found in the cell membrane. It catalyses the reaction di-trans,octa-cis-undecaprenyl diphosphate + H2O = di-trans,octa-cis-undecaprenyl phosphate + phosphate + H(+). Its function is as follows. Catalyzes the dephosphorylation of undecaprenyl diphosphate (UPP). Confers resistance to bacitracin. The chain is Undecaprenyl-diphosphatase from Streptococcus pyogenes serotype M2 (strain MGAS10270).